Here is a 345-residue protein sequence, read N- to C-terminus: Phosphoribosylformylglycinamidine cyclo-ligase (345 aa).

This sequence belongs to the AIR synthase family.

The protein localises to the cytoplasm. It catalyses the reaction 2-formamido-N(1)-(5-O-phospho-beta-D-ribosyl)acetamidine + ATP = 5-amino-1-(5-phospho-beta-D-ribosyl)imidazole + ADP + phosphate + H(+). The protein operates within purine metabolism; IMP biosynthesis via de novo pathway; 5-amino-1-(5-phospho-D-ribosyl)imidazole from N(2)-formyl-N(1)-(5-phospho-D-ribosyl)glycinamide: step 2/2. This is Phosphoribosylformylglycinamidine cyclo-ligase from Limosilactobacillus fermentum (strain NBRC 3956 / LMG 18251) (Lactobacillus fermentum).